Reading from the N-terminus, the 252-residue chain is Chitooligosaccharide deacetylase (252 aa).

Positions 61 and 125 each coordinate Mg(2+).

Belongs to the YdjC deacetylase family. ChbG subfamily. In terms of assembly, homodimer. The cofactor is Mg(2+).

The protein resides in the cytoplasm. The enzyme catalyses N,N'-diacetylchitobiose + H2O = N-acetyl-beta-D-glucosaminyl-(1-&gt;4)-D-glucosamine + acetate. The catalysed reaction is diacetylchitobiose-6'-phosphate + H2O = N'-monoacetylchitobiose-6'-phosphate + acetate. It functions in the pathway glycan degradation; chitin degradation. Involved in the degradation of chitin. ChbG is essential for growth on the acetylated chitooligosaccharides chitobiose and chitotriose but is dispensable for growth on cellobiose and chitosan dimer, the deacetylated form of chitobiose. Deacetylation of chitobiose-6-P and chitotriose-6-P is necessary for both the activation of the chb promoter by the regulatory protein ChbR and the hydrolysis of phosphorylated beta-glucosides by the phospho-beta-glucosidase ChbF. Catalyzes the removal of only one acetyl group from chitobiose-6-P to yield monoacetylchitobiose-6-P, the inducer of ChbR and the substrate of ChbF. This Salmonella paratyphi B (strain ATCC BAA-1250 / SPB7) protein is Chitooligosaccharide deacetylase.